The chain runs to 23 residues: Caerin-4.3 (23 aa).

As to expression, expressed by the skin parotoid and/or rostral glands.

Its subcellular location is the secreted. Antibacterial peptide, that adopts an alpha helical conformation which can disrupt bacterial membranes. Each caerin displays a different antimicrobial specificity. This Ranoidea caerulea (Green tree frog) protein is Caerin-4.3.